The primary structure comprises 450 residues: tRNA (guanine-N(7)-)-methyltransferase non-catalytic subunit TRM82 (450 aa).

Positions 69-82 (AAKKLKTNEGEAIE) are enriched in basic and acidic residues. Residues 69–103 (AAKKLKTNEGEAIERPGNQRRVPLPGKDPKVPVPG) form a disordered region. 3 WD repeats span residues 108 to 147 (PVYQ…KDNC), 200 to 241 (GHVS…VIDK), and 245 to 285 (GHKE…LMSS).

Belongs to the WD repeat TRM82 family. In terms of assembly, forms a heterodimer with the catalytic subunit TRM8.

The protein localises to the nucleus. It functions in the pathway tRNA modification; N(7)-methylguanine-tRNA biosynthesis. Required for the formation of N(7)-methylguanine at position 46 (m7G46) in tRNA. In the complex, it is required to stabilize and induce conformational changes of the catalytic subunit. The protein is tRNA (guanine-N(7)-)-methyltransferase non-catalytic subunit TRM82 of Eremothecium gossypii (strain ATCC 10895 / CBS 109.51 / FGSC 9923 / NRRL Y-1056) (Yeast).